Consider the following 1032-residue polypeptide: MAWEARREPGPRRAAVRETVMLLLCLGVPTGRPYNVDTESALLYQGPHNTLFGYSVVLHSHGANRWLLVGAPTANWLANASVINPGAIYRCRIGKNPGQTCEQLQLGSPNGEPCGKTCLEERDNQWLGVTLSRQPGENGSIVTCGHRWKNIFYIKNENKLPTGGCYGVPPDLRTELSKRIAPCYQDYVKKFGENFASCQAGISSFYTKDLIVMGAPGSSYWTGSLFVYNITTNKYKAFLDKQNQVKFGSYLGYSVGAGHFRSQHTTEVVGGAPQHEQIGKAYIFSIDEKELNILHEMKGKKLGSYFGASVCAVDLNADGFSDLLVGAPMQSTIREEGRVFVYINSGSGAVMNAMETNLVGSDKYAARFGESIVNLGDIDNDGFEDVAIGAPQEDDLQGAIYIYNGRADGISSTFSQRIEGLQISKSLSMFGQSISGQIDADNNGYVDVAVGAFRSDSAVLLRTRPVVIVDASLSHPESVNRTKFDCVENGWPSVCIDLTLCFSYKGKEVPGYIVLFYNMSLDVNRKAESPPRFYFSSNGTSDVITGSIQVSSREANCRTHQAFMRKDVRDILTPIQIEAAYHLGPHVISKRSTEEFPPLQPILQQKKEKDIMKKTINFARFCAHENCSADLQVSAKIGFLKPHENKTYLAVGSMKTLMLNVSLFNAGDDAYETTLHVKLPVGLYFIKILELEEKQINCEVTDNSGVVQLDCSIGYIYVDHLSRIDISFLLDVSSLSRAEEDLSITVHATCENEEEMDNLKHSRVTVAIPLKYEVKLTVHGFVNPTSFVYGSNDENEPETCMVEKMNLTFHVINTGNSMAPNVSVEIMVPNSFSPQTDKLFNILDVQTTTGECHFENYQRVCALEQQKSAMQTLKGIVRFLSKTDKRLLYCIKADPHCLNFLCNFGKMESGKEASVHIQLEGRPSILEMDETSALKFEIRATGFPEPNPRVIELNKDENVAHVLLEGLHHQRPKRYFTIVIISSSLLLGLIVLLLISYVMWKAGFFKRQYKSILQEENRRDSWSYINSKSNDD.

A signal peptide spans 1–33 (MAWEARREPGPRRAAVRETVMLLLCLGVPTGRP). FG-GAP repeat units lie at residues 35 to 100 (NVDT…PGQT), 110 to 177 (NGEP…TELS), 185 to 237 (QDYV…KYKA), 238 to 291 (FLDK…EKEL), 292 to 351 (NILH…GAVM), 355 to 412 (ETNL…GISS), and 416 to 478 (QRIE…HPES). Over 35 to 977 (NVDTESALLY…HHQRPKRYFT (943 aa)) the chain is Extracellular. A glycan (N-linked (GlcNAc...) asparagine) is linked at N79. A disulfide bond links C91 and C101. N-linked (GlcNAc...) asparagine glycosylation is present at N138. Disulfide bonds link C144/C165 and C183/C198. N-linked (GlcNAc...) asparagine glycosylation is present at N229. D314, N316, D318, D322, D377, D379, D381, D385, D439, D441, N443, Y445, and D447 together coordinate Ca(2+). Residue N480 is glycosylated (N-linked (GlcNAc...) asparagine). 2 disulfides stabilise this stretch: C486–C495 and C501–C557. N518 and N538 each carry an N-linked (GlcNAc...) asparagine glycan. Residues 606–616 (KKEKDIMKKTI) carry the SG1 motif. A disulfide bridge links C622 with C627. N-linked (GlcNAc...) asparagine glycans are attached at residues N626, N645, and N660. C698 and C711 form a disulfide bridge. 2 N-linked (GlcNAc...) asparagine glycosylation sites follow: N806 and N821. 2 disulfides stabilise this stretch: C852–C890 and C897–C902. Residues 978–1001 (IVIISSSLLLGLIVLLLISYVMWK) form a helical membrane-spanning segment. Residues 1002–1032 (AGFFKRQYKSILQEENRRDSWSYINSKSNDD) are Cytoplasmic-facing. The GFFKR motif motif lies at 1003–1007 (GFFKR). Residue S1021 is modified to Phosphoserine.

This sequence belongs to the integrin alpha chain family. Heterodimer of an alpha and a beta subunit. The alpha subunit can sometimes be cleaved into two non-covalently associated fragments. Alpha-4 associates with either beta-1 or beta-7. Alpha-4 interacts with PXN, LPXN, and TGFB1I1/HIC5. Interacts with CSPG4 through CSPG4 chondroitin sulfate glycosaminoglycan. Interacts with JAML; integrin alpha-4/beta-1 may regulate leukocyte to endothelial cells adhesion by controlling JAML homodimerization. ITGA4:ITGB1 is found in a ternary complex with CX3CR1 and CX3CL1. Interacts with MDK. ITGA4:ITGB1 interacts with MDK; this interaction mediates MDK-induced osteoblast cells migration through PXN phosphorylation. Integrin ITGA4:ITGB1 interacts with SVEP1 (via Sushi domain 21); thereby inhibits Ca(2+) intracellular signaling and as a result represses vasocontraction. ITGA4:ITGB1 interacts with SELP. ITGA4:ITGB1 interacts with BCAM. Phosphorylation on Ser-1027 inhibits PXN binding. Expressed in vascular smooth muscle cells (at protein level).

It localises to the membrane. Integrins alpha-4/beta-1 (VLA-4) and alpha-4/beta-7 are receptors for fibronectin. They recognize one or more domains within the alternatively spliced CS-1 and CS-5 regions of fibronectin. They are also receptors for VCAM1. Integrin alpha-4/beta-1 recognizes the sequence Q-I-D-S in VCAM1. Integrin alpha-4/beta-7 is also a receptor for MADCAM1. It recognizes the sequence L-D-T in MADCAM1. On activated endothelial cells integrin VLA-4 triggers homotypic aggregation for most VLA-4-positive leukocyte cell lines. It may also participate in cytolytic T-cell interactions with target cells. ITGA4:ITGB1 binds to fractalkine (CX3CL1) and may act as its coreceptor in CX3CR1-dependent fractalkine signaling. ITGA4:ITGB1 binds to PLA2G2A via a site (site 2) which is distinct from the classical ligand-binding site (site 1) and this induces integrin conformational changes and enhanced ligand binding to site 1. Integrin ITGA4:ITGB1 represses PRKCA-mediated L-type voltage-gated channel Ca(2+) influx and ROCK-mediated calcium sensitivity in vascular smooth muscle cells via its interaction with SVEP1, thereby inhibiting vasocontraction. The protein is Integrin alpha-4 (ITGA4) of Homo sapiens (Human).